Reading from the N-terminus, the 314-residue chain is Malate dehydrogenase (314 aa).

NAD(+) contacts are provided by residues G11–G16 and D35. Substrate-binding residues include R84 and R90. NAD(+)-binding positions include N97 and I120 to N122. Substrate-binding residues include N122 and R153. The Proton acceptor role is filled by H177.

The protein belongs to the LDH/MDH superfamily. MDH type 3 family.

The catalysed reaction is (S)-malate + NAD(+) = oxaloacetate + NADH + H(+). Catalyzes the reversible oxidation of malate to oxaloacetate. This is Malate dehydrogenase from Rickettsia prowazekii (strain Madrid E).